The chain runs to 267 residues: Diphthine--ammonia ligase (267 aa).

The residue at position 97 (tyrosine 97) is a Phosphotyrosine.

This sequence belongs to the Diphthine--ammonia ligase family.

The catalysed reaction is diphthine-[translation elongation factor 2] + NH4(+) + ATP = diphthamide-[translation elongation factor 2] + AMP + diphosphate + H(+). The protein operates within protein modification; peptidyl-diphthamide biosynthesis. In terms of biological role, amidase that catalyzes the last step of diphthamide biosynthesis using ammonium and ATP. Diphthamide biosynthesis consists in the conversion of an L-histidine residue in the translation elongation factor eEF-2 (EEF2) to diphthamide. This is Diphthine--ammonia ligase (Dph6) from Rattus norvegicus (Rat).